We begin with the raw amino-acid sequence, 653 residues long: DNA polymerase (653 aa).

The protein belongs to the DNA polymerase type-B family.

It catalyses the reaction DNA(n) + a 2'-deoxyribonucleoside 5'-triphosphate = DNA(n+1) + diphosphate. Its function is as follows. Replicates viral genomic DNA. This chain is DNA polymerase, found in Acidianus convivator (ABV).